The following is a 151-amino-acid chain: Testis-expressed protein 29 (151 aa).

At 1–56 the chain is on the extracellular side; it reads MEYVLEVKNSPRHLLKQFTVCDVPLYDICDYNVSRDRCQELGCCFYEGVCYKKAVP. Residues 57–77 form a helical membrane-spanning segment; that stretch reads IYIHVFSALIVIIAGAFVITI. Residues 78-151 lie on the Cytoplasmic side of the membrane; the sequence is IYRVIQESRK…TITEAEETED (74 aa). The tract at residues 100 to 151 is disordered; sequence KSSEKAELASSSSKLGLKPASPGPPSAGPSMKSDEDKDDVTGTITEAEETED. Positions 107–119 are enriched in low complexity; that stretch reads LASSSSKLGLKPA.

The protein localises to the membrane. This chain is Testis-expressed protein 29 (TEX29), found in Homo sapiens (Human).